The primary structure comprises 308 residues: tRNA pseudouridine synthase B (308 aa).

D47 acts as the Nucleophile in catalysis.

The protein belongs to the pseudouridine synthase TruB family. Type 1 subfamily.

The catalysed reaction is uridine(55) in tRNA = pseudouridine(55) in tRNA. Responsible for synthesis of pseudouridine from uracil-55 in the psi GC loop of transfer RNAs. In Xanthomonas campestris pv. campestris (strain 8004), this protein is tRNA pseudouridine synthase B.